The primary structure comprises 492 residues: MTDLTSLTLAEARDGLAAKSFSSLQLTDAHLAAIEAARVLNAFVLETPDQARSMAKAADAKIAKGEGGPLEGLPLGIKDLFATSGVRTTACSKILDDFTPPYESTVTSQLWRDGAVLLGKLNNDEFAMGSSNETSCFGPVVNPWRREGSDAKLVPGGSSGGSASAVAAGLCLGATATDTGGSIRQPAAFTGTVGIKPTYGRCSRWGIVAFASSLDQAGPIARTVRDSAILLRSMAGYDAKDTTSVDRAVPDYEAAVGRSVKGMKIGIPKEYRIGGMPAEIEALWKQGADWLKAAGAELVEVSLPHTKYALPAYYIVAPAEASSNLARYDGVRYGARVNGRNITEMYENTRAQGFGAEVIRRIMIGTYVLSAGYYDAYYLRAQKVRTLIKRDFEECFAKGVSAILTPATPSAAFGIGEKGGADPVEMYLNDIFTVTVNMAGLPGIAVPAGRDSQGLPLGLQLIGRPFDEETLFSLGEVIEQAAGRFTAAKWWI.

Catalysis depends on charge relay system residues lysine 78 and serine 158. Serine 182 (acyl-ester intermediate) is an active-site residue.

The protein belongs to the amidase family. GatA subfamily. Heterotrimer of A, B and C subunits.

The catalysed reaction is L-glutamyl-tRNA(Gln) + L-glutamine + ATP + H2O = L-glutaminyl-tRNA(Gln) + L-glutamate + ADP + phosphate + H(+). In terms of biological role, allows the formation of correctly charged Gln-tRNA(Gln) through the transamidation of misacylated Glu-tRNA(Gln) in organisms which lack glutaminyl-tRNA synthetase. The reaction takes place in the presence of glutamine and ATP through an activated gamma-phospho-Glu-tRNA(Gln). This Rhodopseudomonas palustris (strain BisB18) protein is Glutamyl-tRNA(Gln) amidotransferase subunit A.